The following is a 355-amino-acid chain: Guanine nucleotide-binding protein G(i) subunit alpha-2 (355 aa).

A lipid anchor (N-myristoyl glycine) is attached at glycine 2. The S-palmitoyl cysteine moiety is linked to residue cysteine 3. A G-alpha domain is found at 32 to 355 (REVKLLLLGA…KNNLKDCGLF (324 aa)). Residues 35–48 (KLLLLGAGESGKST) are G1 motif. GTP is bound by residues 40 to 47 (GAGESGKS), 176 to 182 (LRTRVKT), 201 to 205 (DVGGQ), 270 to 273 (NKKD), and alanine 327. Residue serine 47 coordinates Mg(2+). Residues 174–182 (DVLRTRVKT) are G2 motif. Arginine 179 bears the ADP-ribosylarginine; by cholera toxin mark. A Mg(2+)-binding site is contributed by threonine 182. Residues 197-206 (FKMFDVGGQR) are G3 motif. The residue at position 205 (glutamine 205) is a Deamidated glutamine; by Photorhabdus PAU_02230. A G4 motif region spans residues 266-273 (ILFLNKKD). The interval 325 to 330 (TCATDT) is G5 motif. Cysteine 352 is subject to ADP-ribosylcysteine; by pertussis toxin.

Belongs to the G-alpha family. G(i/o/t/z) subfamily. As to quaternary structure, g proteins are composed of 3 units; alpha, beta and gamma. The alpha chain contains the guanine nucleotide binding site. In this context, interacts with GNB2. Interacts with GPSM1. Interacts with RGS12 and RGS14. Interacts with UNC5B. Interacts (inactive GDP-bound form) with NUCB1 (via GBA motif); the interaction leads to activation of GNAI3. Interacts (inactive GDP-bound form) with CCDC88C/DAPLE (via GBA motif). Interacts (inactive GDP-bound form) with CCDC8A/GIV (via GBA motif). Interacts with CXCR1 and CXCR2. Post-translationally, (Microbial infection) Deamidated at Gln-205 by Photorhabdus asymbiotica toxin PAU_02230, blocking GTP hydrolysis of heterotrimeric GNAQ or GNA11 and G-alphai (GNAI1, GNAI2 or GNAI3) proteins, thereby activating RhoA.

The protein resides in the cytoplasm. It is found in the cytoskeleton. It localises to the microtubule organizing center. The protein localises to the centrosome. Its subcellular location is the cell membrane. The protein resides in the membrane. Functionally, guanine nucleotide-binding proteins (G proteins) are involved as modulators or transducers in various transmembrane signaling systems. The G(i) proteins are involved in hormonal regulation of adenylate cyclase: they inhibit the cyclase in response to beta-adrenergic stimuli. May play a role in cell division. Regulates the cell surface density of dopamine receptors DRD2 by sequestrating them as an intracellular pool. The chain is Guanine nucleotide-binding protein G(i) subunit alpha-2 (GNAI2) from Homo sapiens (Human).